The primary structure comprises 219 residues: Large ribosomal subunit protein uL3 (219 aa).

Residues 134–153 (RASHGNSRSHNVPGSIGMAQ) form a disordered region. Q153 is modified (N5-methylglutamine).

It belongs to the universal ribosomal protein uL3 family. In terms of assembly, part of the 50S ribosomal subunit. Forms a cluster with proteins L14 and L19. Post-translationally, methylated by PrmB.

In terms of biological role, one of the primary rRNA binding proteins, it binds directly near the 3'-end of the 23S rRNA, where it nucleates assembly of the 50S subunit. The chain is Large ribosomal subunit protein uL3 from Paraburkholderia phytofirmans (strain DSM 17436 / LMG 22146 / PsJN) (Burkholderia phytofirmans).